The following is a 444-amino-acid chain: C4-dicarboxylate transport protein 1 (444 aa).

9 helical membrane passes run 9–29, 42–62, 78–98, 152–172, 190–210, 221–241, 307–327, 354–374, and 380–400; these read SIFLQVVIGLVIGVLCGVGIP, FIKLIKMLIALIVFCVVVNGI, SVIYFEILTTIALVLGLVVAY, ILQVLLFSVLFGSALNLVGEQ, IMGMIVRLAPLGVFGAVAFTT, LGALVLVFYATCLVFVMAVLG, FSIYLTLAVVFIAHVTGTPLA, VILAATLTAVPAIPVAGLVLV, and FMGIGRALTNLIGNCVATVTI.

It belongs to the dicarboxylate/amino acid:cation symporter (DAACS) (TC 2.A.23) family.

It localises to the cell inner membrane. Responsible for the transport of dicarboxylates such as succinate, fumarate, and malate from the periplasm across the membrane. This chain is C4-dicarboxylate transport protein 1, found in Pseudomonas paraeruginosa (strain DSM 24068 / PA7) (Pseudomonas aeruginosa (strain PA7)).